A 648-amino-acid chain; its full sequence is Macrolide export ATP-binding/permease protein MacB (648 aa).

Residues 5–243 (LELKDIRRSY…AGGTEPVVNT (239 aa)) form the ABC transporter domain. 41 to 48 (GASGSGKS) serves as a coordination point for ATP. The next 4 membrane-spanning stretches (helical) occupy residues 273–293 (LLTMLGIIIGIASVVSIVVVG), 523–543 (LFLTLVAVISLVVGGIGVMNI), 576–596 (AVLVCLVGGALGITLSLLIAF), and 600–620 (LFLPGWEIGFSPLALLLAFLC).

It belongs to the ABC transporter superfamily. Macrolide exporter (TC 3.A.1.122) family. In terms of assembly, homodimer. Part of the tripartite efflux system MacAB-TolC, which is composed of an inner membrane transporter, MacB, a periplasmic membrane fusion protein, MacA, and an outer membrane component, TolC. The complex forms a large protein conduit and can translocate molecules across both the inner and outer membranes. Interacts with MacA.

Its subcellular location is the cell inner membrane. Functionally, part of the tripartite efflux system MacAB-TolC. MacB is a non-canonical ABC transporter that contains transmembrane domains (TMD), which form a pore in the inner membrane, and an ATP-binding domain (NBD), which is responsible for energy generation. Confers resistance against macrolides. The polypeptide is Macrolide export ATP-binding/permease protein MacB (Shigella flexneri).